The chain runs to 114 residues: Nucleoid-associated protein MAB_0319 (114 aa).

Belongs to the YbaB/EbfC family. Homodimer.

It localises to the cytoplasm. Its subcellular location is the nucleoid. Its function is as follows. Binds to DNA and alters its conformation. May be involved in regulation of gene expression, nucleoid organization and DNA protection. In Mycobacteroides abscessus (strain ATCC 19977 / DSM 44196 / CCUG 20993 / CIP 104536 / JCM 13569 / NCTC 13031 / TMC 1543 / L948) (Mycobacterium abscessus), this protein is Nucleoid-associated protein MAB_0319.